The chain runs to 327 residues: Annexin A8 (327 aa).

Annexin repeat units lie at residues 21 to 92 (FNPD…ALMY), 93 to 164 (PPYR…CLLQ), 177 to 249 (GLAL…TVVK), and 253 to 324 (NLHS…SLVG). Residues Met266, Gly268, Gly270, and Asp310 each contribute to the Ca(2+) site.

The protein belongs to the annexin family.

Functionally, this protein is an anticoagulant protein that acts as an indirect inhibitor of the thromboplastin-specific complex, which is involved in the blood coagulation cascade. In Pan troglodytes (Chimpanzee), this protein is Annexin A8 (ANXA8).